We begin with the raw amino-acid sequence, 662 residues long: 3',5'-cyclic-AMP phosphodiesterase, isoform F (662 aa).

2 disordered regions span residues 79 to 108 and 207 to 245; these read VPAS…LSQG and SAGQ…RLPT. Polar residues predominate over residues 80–98; sequence PASNKSRRPNQSSSASRSG. The 330-residue stretch at 248–577 folds into the PDEase domain; the sequence is VETPRENELG…DYYQSMIPPS (330 aa). Catalysis depends on His-324, which acts as the Proton donor. 3',5'-cyclic AMP is bound at residue 324 to 328; the sequence is HNSLH. A divalent metal cation-binding residues include His-328, His-364, Asp-365, and Asp-482. 3',5'-cyclic AMP contacts are provided by Asp-365, Asp-482, and Gln-533. Acidic residues predominate over residues 599-616; that stretch reads EESDQENLAELEEGDESG. The interval 599-662 is disordered; sequence EESDQENLAE…CQNQPQHGGM (64 aa). Low complexity predominate over residues 617–634; the sequence is GESTTTGTTGTTAASALS. Residues 635-646 are compositionally biased toward gly residues; the sequence is GAGGGGGGGGGM. The segment covering 652 to 662 has biased composition (polar residues); it reads GCQNQPQHGGM.

It belongs to the cyclic nucleotide phosphodiesterase family. PDE4 subfamily. As to quaternary structure, monomer. Requires a divalent metal cation as cofactor.

It carries out the reaction 3',5'-cyclic AMP + H2O = AMP + H(+). Its pathway is purine metabolism; 3',5'-cyclic AMP degradation; AMP from 3',5'-cyclic AMP: step 1/1. In terms of biological role, hydrolyzes the second messenger cAMP, which is a key regulator of many important physiological processes. Vital for female fertility. Required for learning/memory. The chain is 3',5'-cyclic-AMP phosphodiesterase, isoform F from Drosophila melanogaster (Fruit fly).